The primary structure comprises 182 residues: UPF0301 protein NGK_1355 (182 aa).

This sequence belongs to the UPF0301 (AlgH) family.

The protein is UPF0301 protein NGK_1355 of Neisseria gonorrhoeae (strain NCCP11945).